Consider the following 470-residue polypeptide: Pyoverdine export outer membrane protein OpmQ (470 aa).

Residues 1-18 form the signal peptide; it reads MTLPRHLCLLPLSLSLLA. Cys19 carries N-palmitoyl cysteine lipidation. Cys19 is lipidated: S-diacylglycerol cysteine.

Belongs to the outer membrane factor (OMF) (TC 1.B.17) family. In terms of assembly, part of the tripartite efflux system PvdRT-OpmQ, which is composed of an inner membrane component with both ATPase and permease domains, PvdT, a periplasmic membrane fusion protein, PvdR, and an outer membrane component, OpmQ.

The protein localises to the cell outer membrane. In terms of biological role, part of the tripartite efflux system PvdRT-OpmQ required for the secretion into the extracellular milieu of the siderophore pyoverdine (PVD), which is involved in iron acquisition. The system is responsible for export of newly synthesized PVD after the final steps of biosynthesis have taken place in the periplasm. It is also responsible for recycling of PVD after internalization of ferri-PVD into the periplasm by the outer-membrane receptor FpvA and release of iron from PVD, thus making PVD available for new cycles of iron uptake. Contributes to resistance against ampicillin. The sequence is that of Pyoverdine export outer membrane protein OpmQ from Pseudomonas putida (strain ATCC 47054 / DSM 6125 / CFBP 8728 / NCIMB 11950 / KT2440).